The chain runs to 312 residues: tRNA-dihydrouridine(16) synthase (312 aa).

Residues proline 7–glutamate 9 and glutamine 68 each bind FMN. Residue cysteine 98 is the Proton donor of the active site. Residues lysine 139, asparagine 200–glutamate 202, and glycine 224–arginine 225 each bind FMN.

It belongs to the Dus family. DusC subfamily. The cofactor is FMN.

It catalyses the reaction 5,6-dihydrouridine(16) in tRNA + NADP(+) = uridine(16) in tRNA + NADPH + H(+). The enzyme catalyses 5,6-dihydrouridine(16) in tRNA + NAD(+) = uridine(16) in tRNA + NADH + H(+). In terms of biological role, catalyzes the synthesis of 5,6-dihydrouridine (D), a modified base found in the D-loop of most tRNAs, via the reduction of the C5-C6 double bond in target uridines. Specifically modifies U16 in tRNAs. This chain is tRNA-dihydrouridine(16) synthase, found in Yersinia pestis.